The following is a 437-amino-acid chain: O-methyltransferase elcB (437 aa).

D269 contributes to the S-adenosyl-L-methionine binding site. H319 functions as the Proton acceptor in the catalytic mechanism.

This sequence belongs to the class I-like SAM-binding methyltransferase superfamily. Cation-independent O-methyltransferase family. COMT subfamily.

Its pathway is secondary metabolite biosynthesis. O-methyltransferase; part of the gene cluster that mediates the biosynthesis of elsinochrome C, a perelyenequinone phytotoxin structurally similar to cercosporin. The first step of elsinochrome C biosynthesis is performed by the polyketide synthase elcA which catalyzes the formation of nor-toralactone. The starter unit acyltransferase (SAT) domain of elcA initiates polyketide extension by the selective utilization of acetyl-CoA, which is elongated to the heptaketide in the beta-ketoacyl synthase (KS) domain by successive condensations with six malonyl units introduced by the malonyl acyltransferase (MAT) domain. The product template (PT) domain catalyzes C4-C9 and C2-C11 aldol cyclizations and dehydrations to a trihydroxynaphthalene, which is thought to be delivered to the thioesterase (TE) domain for product release. The bifunctional enzyme elcB then methylates nor-toralactone to toralactone before conducting an unusual oxidative aromatic ring opening. The next step in perylenequinone biosynthesis is an O-methylation at the nascent OH-6 of the elcB product performed by the O-methyltransferase elcD. The oxidative coupling of the two monomeric naphthol units in perylenequinone biosynthesis is catalyzed by the FAD-dependent monooxygenase elcE and the multicopper oxidase elcG. ElcG might catalyze the first intermolecular coupling in a regio- and stereo-selective manner via a phenol radical coupling mechanism and the elcE could forge the second C-C bond intramolecularly via a hydride transfer mechanism. The fasciclin domain-containing protein elcF might also play a role duting this step. The last piece of the puzzle in the biosynthesis of elsinochrome C is the additional annulation by enolate coupling to afford the dihydrobenzo(ghi)perylenequinone system, catalyzed by the FAD-dependent monooxygenase elcH. The protein is O-methyltransferase elcB of Phaeosphaeria nodorum (strain SN15 / ATCC MYA-4574 / FGSC 10173) (Glume blotch fungus).